A 548-amino-acid polypeptide reads, in one-letter code: 2-succinyl-5-enolpyruvyl-6-hydroxy-3-cyclohexene-1-carboxylate synthase (548 aa).

Belongs to the TPP enzyme family. MenD subfamily. As to quaternary structure, homodimer. It depends on Mg(2+) as a cofactor. Mn(2+) serves as cofactor. The cofactor is thiamine diphosphate.

The catalysed reaction is isochorismate + 2-oxoglutarate + H(+) = 5-enolpyruvoyl-6-hydroxy-2-succinyl-cyclohex-3-ene-1-carboxylate + CO2. Its pathway is quinol/quinone metabolism; 1,4-dihydroxy-2-naphthoate biosynthesis; 1,4-dihydroxy-2-naphthoate from chorismate: step 2/7. The protein operates within quinol/quinone metabolism; menaquinone biosynthesis. Functionally, catalyzes the thiamine diphosphate-dependent decarboxylation of 2-oxoglutarate and the subsequent addition of the resulting succinic semialdehyde-thiamine pyrophosphate anion to isochorismate to yield 2-succinyl-5-enolpyruvyl-6-hydroxy-3-cyclohexene-1-carboxylate (SEPHCHC). This chain is 2-succinyl-5-enolpyruvyl-6-hydroxy-3-cyclohexene-1-carboxylate synthase, found in Mycolicibacterium vanbaalenii (strain DSM 7251 / JCM 13017 / BCRC 16820 / KCTC 9966 / NRRL B-24157 / PYR-1) (Mycobacterium vanbaalenii).